The chain runs to 206 residues: Threonine efflux protein (206 aa).

Residues 1 to 21 (MLMLFFTVAMVHIVALMSPGP) traverse the membrane as a helical segment. The Periplasmic portion of the chain corresponds to 22 to 43 (DFFFVSQTAVSRSRKEAMMGVL). Residues 44–64 (GITCGVMVWAGVALLGLHLII) traverse the membrane as a helical segment. Residues 65–66 (EK) lie on the Cytoplasmic side of the membrane. The helical transmembrane segment at 67–87 (MAWLHTIIMVGGGLYLCWMGY) threads the bilayer. Residues 88–149 (QMLRGALKKQ…VGDNVGAAAR (62 aa)) lie on the Periplasmic side of the membrane. Residues 150–173 (WGIFALITLETLAWFTVVASLFAL) form a helical membrane-spanning segment. Residues 174–206 (PKMRRGYQRLAKWIDGFAGALFAGFGIHLIISR) are Cytoplasmic-facing.

This sequence belongs to the Rht family.

The protein resides in the cell inner membrane. Functionally, conducts the efflux of threonine. This Salmonella typhi protein is Threonine efflux protein (rhtC).